A 582-amino-acid chain; its full sequence is Aspartate--tRNA ligase (582 aa).

Glu-174 provides a ligand contact to L-aspartate. The tract at residues 198–201 is aspartate; it reads QITK. Arg-220 serves as a coordination point for L-aspartate. ATP is bound by residues 220 to 222 and Gln-229; that span reads RDE. An L-aspartate-binding site is contributed by His-443. Residue Glu-477 participates in ATP binding. Residue Arg-484 participates in L-aspartate binding. 529 to 532 serves as a coordination point for ATP; it reads GLDR.

It belongs to the class-II aminoacyl-tRNA synthetase family. Type 1 subfamily. As to quaternary structure, homodimer.

The protein resides in the cytoplasm. The enzyme catalyses tRNA(Asp) + L-aspartate + ATP = L-aspartyl-tRNA(Asp) + AMP + diphosphate. Its function is as follows. Catalyzes the attachment of L-aspartate to tRNA(Asp) in a two-step reaction: L-aspartate is first activated by ATP to form Asp-AMP and then transferred to the acceptor end of tRNA(Asp). The polypeptide is Aspartate--tRNA ligase (Streptococcus pyogenes serotype M5 (strain Manfredo)).